A 634-amino-acid chain; its full sequence is Zinc finger and BTB domain-containing protein 22 (634 aa).

One can recognise a BTB domain in the interval 57-121; that stretch reads CDVSIRVQGR…AYTGRLSMAA (65 aa). 2 disordered regions span residues 167–247 and 308–461; these read TVPG…APVV and APTP…GTSV. Residues 180 to 198 are compositionally biased toward low complexity; sequence TVAPATMGSARSHASSRAS. Residues 199-209 show a composition bias toward polar residues; it reads ENQSPSSSNYF. Residue serine 202 is modified to Phosphoserine. Over residues 217 to 229 the composition is skewed to low complexity; sequence FSSSSQEAFAASA. A compositionally biased stretch (acidic residues) spans 317 to 340; it reads PDLEEEEEEEDLVLTCEDDEDEEL. Low complexity predominate over residues 452–461; that stretch reads GAVTVGGTSV. A C2H2-type 1; atypical zinc finger spans residues 486–507; sequence FLCHCGKAFSHKSMRDRHVNMH. C2H2-type zinc fingers lie at residues 513–535 and 541–562; these read FDCP…MKTH and YECG…HRGH. Positions 568-634 are disordered; that stretch reads RLGGVGAVPG…MGFGGGGGAN (67 aa). Residues 608 to 618 are compositionally biased toward low complexity; it reads PPSSRRVWSPP.

Belongs to the krueppel C2H2-type zinc-finger protein family.

The protein resides in the nucleus. Its function is as follows. May be involved in transcriptional regulation. This Homo sapiens (Human) protein is Zinc finger and BTB domain-containing protein 22 (ZBTB22).